The chain runs to 148 residues: Snaclec 4 (148 aa).

The N-terminal stretch at 1–23 is a signal peptide; that stretch reads MGRFIFVSFSLLVVFFSLSGTEA. A C-type lectin domain is found at 34 to 148; the sequence is YDQNCYKAFE…DTQFRLQEPG (115 aa).

This sequence belongs to the snaclec family. In terms of assembly, heterodimer; disulfide-linked. Contains disulfide bonds. In terms of tissue distribution, expressed by the venom gland.

The protein resides in the secreted. Its function is as follows. Interferes with one step of hemostasis (modulation of platelet aggregation, or coagulation cascade, for example). This Echis pyramidum leakeyi (Leakey's carpet viper) protein is Snaclec 4.